A 467-amino-acid chain; its full sequence is MSSAPTTPPSVDKVDGFSRKSVRKARQKRSQSSSQFRSQGKPIELTPLPLLKDVPSSEQPELFLKKLQQCCVIFDFMDTLSDLKMKEYKRSTLNELVDYITISRGCLTEQTYPEVVRMVSCNIFRTLPPSDSNEFDPEEDEPTLEASWPHLQLVYEFFIRFLESQEFQPSIAKKYIDQKFVLQLLELFDSEDPRERDYLKTVLHRIYGKFLGLRAFIRKQINNIFLRFVYETEHFNGVAELLEILGSIINGFALPLKAEHKQFLVKVLIPLHTVRSLSLFHAQLAYCIVQFLEKDPSLTEPVIRGLMKFWPKTCSQKEVMFLGELEEILDVIEPSQFVKIQEPLFKQIAKCVSSPHFQVAERALYYWNNEYIMSLIEENSNVILPIMFSSLYRISKEHWNPAIVALVYNVLKAFMEMNSTMFDELTATYKSDRQREKKKEKEREELWKKLEDLELKRGLRRDGIIPT.

Residues 1–40 (MSSAPTTPPSVDKVDGFSRKSVRKARQKRSQSSSQFRSQG) form a disordered region. At serine 2 the chain carries N-acetylserine. At threonine 7 the chain carries Phosphothreonine. Residues 20–29 (KSVRKARQKR) show a composition bias toward basic residues. A phosphoserine mark is found at serine 30, serine 32, and serine 34. The segment covering 30 to 40 (SQSSSQFRSQG) has biased composition (low complexity).

It belongs to the phosphatase 2A regulatory subunit B56 family. As to quaternary structure, found in a complex with at least ARL2, PPP2CB; PPP2R1A, PPP2R2A, PPP2R5E and TBCD. PP2A consists of a common heterodimeric core enzyme, composed of a 36 kDa catalytic subunit (subunit C) and a 65 kDa constant regulatory subunit (PR65 or subunit A), that associates with a variety of regulatory subunits. Proteins that associate with the core dimer include three families of regulatory subunits B (the R2/B/PR55/B55, R3/B''/PR72/PR130/PR59 and R5/B'/B56 families), the 48 kDa variable regulatory subunit, viral proteins, and cell signaling molecules. Interacts with SGO1. In terms of processing, phosphorylated on serine residues.

It is found in the cytoplasm. Functionally, the B regulatory subunit might modulate substrate selectivity and catalytic activity, and might also direct the localization of the catalytic enzyme to a particular subcellular compartment. The polypeptide is Serine/threonine-protein phosphatase 2A 56 kDa regulatory subunit epsilon isoform (PPP2R5E) (Homo sapiens (Human)).